A 74-amino-acid chain; its full sequence is Conotoxin Cal27 (74 aa).

An N-terminal signal peptide occupies residues 1–19 (MSGTGVLLLTLLLLVAMAA).

In terms of processing, may contain 4 disulfide bonds. In terms of tissue distribution, expressed by the venom duct.

The protein localises to the secreted. Its function is as follows. Probable neurotoxin. This chain is Conotoxin Cal27, found in Californiconus californicus (California cone).